The primary structure comprises 367 residues: MAHAELATEQMLLKEIGRTERNRRQIRGWLAAVLFALFALVLVGGATRLTESGLSITEWKPVHGVIPPLSAEEWEEEFRLYQRIPQYEQINKGMTVDEFKTIFWWEWAHRLLARGIGVIFALPLFFFWVTGRIERRLRLPLLGILALGGFQGFIGWWMVSSGLAERTAVSQYRLATHLTIACLIFAACMWIYRGLCPHSDDAHPTKRSQGMAGAIAIMSLFQIYLGAIVAGLDAGLSYNTWPLMDGAIVPGGLFVQQPAWINLFENPKTVQFVHRLGAYLLFALALWHMIASLRAAPETTHARRSVLLFALVTVQAAIGITTLLLQVPIGWGVLHQGGALVVLGFAIAHWRGFVGTYPRDTAIEMRD.

A run of 5 helical transmembrane segments spans residues Ile-26–Ala-46, Leu-111–Gly-131, Leu-139–Val-159, Leu-174–Gly-194, and Ala-212–Leu-232. Residue His-274 coordinates heme. Transmembrane regions (helical) follow at residues Leu-276–Ala-296, Ser-305–Leu-325, and Val-327–Ile-347. Heme is bound at residue His-335.

The protein belongs to the COX15/CtaA family. Type 2 subfamily. In terms of assembly, interacts with CtaB. Heme b serves as cofactor.

The protein localises to the cell membrane. It carries out the reaction Fe(II)-heme o + 2 A + H2O = Fe(II)-heme a + 2 AH2. Its pathway is porphyrin-containing compound metabolism; heme A biosynthesis; heme A from heme O: step 1/1. Catalyzes the conversion of heme O to heme A by two successive hydroxylations of the methyl group at C8. The first hydroxylation forms heme I, the second hydroxylation results in an unstable dihydroxymethyl group, which spontaneously dehydrates, resulting in the formyl group of heme A. The polypeptide is Heme A synthase (Rhizobium meliloti (strain 1021) (Ensifer meliloti)).